Consider the following 385-residue polypeptide: Cellulase CelDZ1 (385 aa).

The helical transmembrane segment at 6–26 (INKWYFFVGMLVIFAVIISLI) threads the bilayer. Residues H87, 91–92 (WF), Y118, and H153 contribute to the substrate site. The Proton donor role is filled by E192. Y261 contacts substrate. The Nucleophile role is filled by E294. Substrate contacts are provided by residues 300-301 (AS), W328, and 333-335 (KNE).

The protein belongs to the glycosyl hydrolase 5 (cellulase A) family. In terms of assembly, monomer.

Its subcellular location is the cell membrane. It catalyses the reaction Endohydrolysis of (1-&gt;4)-beta-D-glucosidic linkages in cellulose, lichenin and cereal beta-D-glucans.. With respect to regulation, activity is enhanced by 1mM Mn(2+), but is not affected by 1mM Ca(2+), Mg(2+), Zn(2+), K(+), Na(+) or Li(+). Activity is not inhibited by EDTA (in vitro). Functionally, thermostable endoglucanase that has high activity with soluble polymeric substrates containing beta-1,4-glycosidic bonds, such as carboxymethyl cellulose (CMC) and barley beta-D-glucan (in vitro). Has no activity with cellobiose and filter paper. Has no activity with substrates containing beta-1,3-linked glycans, such as laminarin. Likewise, lacks activity with xylan, galactomannan and pectin. This chain is Cellulase CelDZ1, found in Thermoanaerobacterium sp.